A 141-amino-acid chain; its full sequence is Hemoglobin subunit alpha-1/2 (141 aa).

Residues 1 to 141 enclose the Globin domain; it reads VLSPADKTNV…VSTVLTSKYR (141 aa). S3 carries the phosphoserine modification. Position 7 is an N6-succinyllysine (K7). T8 is subject to Phosphothreonine. K11 carries the post-translational modification N6-succinyllysine. K16 is subject to N6-acetyllysine; alternate. K16 carries the post-translational modification N6-succinyllysine; alternate. Position 24 is a phosphotyrosine (Y24). A Phosphoserine modification is found at S35. The residue at position 40 (K40) is an N6-succinyllysine. S49 is subject to Phosphoserine. H58 is a binding site for O2. H87 serves as a coordination point for heme b. S102 carries the phosphoserine modification. T108 carries the post-translational modification Phosphothreonine. Phosphoserine is present on residues S124 and S131. Residues T134 and T137 each carry the phosphothreonine modification. A Phosphoserine modification is found at S138.

Belongs to the globin family. In terms of assembly, heterotetramer of two alpha chains and two beta chains. In terms of tissue distribution, red blood cells.

Involved in oxygen transport from the lung to the various peripheral tissues. The polypeptide is Hemoglobin subunit alpha-1/2 (Macaca speciosa (Stump-tail macaque)).